The following is a 501-amino-acid chain: Phenylalanine--tRNA ligase alpha subunit (501 aa).

L-phenylalanine-binding residues include T340 and F423. E425 lines the Mg(2+) pocket. F448 is a binding site for L-phenylalanine.

The protein belongs to the class-II aminoacyl-tRNA synthetase family. Phe-tRNA synthetase alpha subunit type 2 subfamily. As to quaternary structure, tetramer of two alpha and two beta subunits. Requires Mg(2+) as cofactor.

The protein localises to the cytoplasm. It carries out the reaction tRNA(Phe) + L-phenylalanine + ATP = L-phenylalanyl-tRNA(Phe) + AMP + diphosphate + H(+). The sequence is that of Phenylalanine--tRNA ligase alpha subunit from Methanococcus vannielii (strain ATCC 35089 / DSM 1224 / JCM 13029 / OCM 148 / SB).